Here is a 101-residue protein sequence, read N- to C-terminus: MEGNDLDKYRFPKTLSEQNRIIGLPLDEAIPAAVVLLWGFFTKKYLFSLIIAAVIWQLIRAAKCGKSSRWLYNWCYWYLPTELFRVVYRVIPDSSFRKWIK.

Its subcellular location is the cell outer membrane. Its function is as follows. Membrane protein involved in F pilin formation. This Salmonella typhi protein is Protein TraL (traL).